We begin with the raw amino-acid sequence, 432 residues long: Glutamate-1-semialdehyde 2,1-aminomutase (432 aa).

An N6-(pyridoxal phosphate)lysine modification is found at Lys-267.

Belongs to the class-III pyridoxal-phosphate-dependent aminotransferase family. HemL subfamily. Homodimer. It depends on pyridoxal 5'-phosphate as a cofactor.

Its subcellular location is the cytoplasm. It carries out the reaction (S)-4-amino-5-oxopentanoate = 5-aminolevulinate. The protein operates within porphyrin-containing compound metabolism; protoporphyrin-IX biosynthesis; 5-aminolevulinate from L-glutamyl-tRNA(Glu): step 2/2. The chain is Glutamate-1-semialdehyde 2,1-aminomutase from Rhodococcus erythropolis (strain PR4 / NBRC 100887).